A 1174-amino-acid chain; its full sequence is RecBCD enzyme subunit RecB (1174 aa).

Residues 1 to 852 form a DNA-binding and helicase activity, interacts with RecC region; sequence MKIDSLKEKL…GGKTMNYEGL (852 aa). A UvrD-like helicase ATP-binding domain is found at 4-449; that stretch reads DSLKEKLNIF…YYLDTNWRSS (446 aa). 25–32 is an ATP binding site; that stretch reads ASAGTGKT. The region spanning 479–745 is the UvrD-like helicase C-terminal domain; that stretch reads PSSKNLKMNF…KIITIHKSKG (267 aa). The nuclease activity, interacts with RecD and RecA stretch occupies residues 900-1174; sequence TWSITSFSQL…LIKKTMTLIS (275 aa). Mg(2+) contacts are provided by histidine 957, aspartate 1068, and aspartate 1081. Catalysis depends on aspartate 1081, which acts as the For nuclease activity.

This sequence belongs to the helicase family. UvrD subfamily. Heterotrimer of RecB, RecC and RecD. All subunits contribute to DNA-binding. Interacts with RecA. The cofactor is Mg(2+).

It carries out the reaction Exonucleolytic cleavage (in the presence of ATP) in either 5'- to 3'- or 3'- to 5'-direction to yield 5'-phosphooligonucleotides.. The catalysed reaction is Couples ATP hydrolysis with the unwinding of duplex DNA by translocating in the 3'-5' direction.. The enzyme catalyses ATP + H2O = ADP + phosphate + H(+). A helicase/nuclease that prepares dsDNA breaks (DSB) for recombinational DNA repair. Binds to DSBs and unwinds DNA via a highly rapid and processive ATP-dependent bidirectional helicase activity. Unwinds dsDNA until it encounters a Chi (crossover hotspot instigator) sequence from the 3' direction. Cuts ssDNA a few nucleotides 3' to the Chi site. The properties and activities of the enzyme are changed at Chi. The Chi-altered holoenzyme produces a long 3'-ssDNA overhang and facilitates RecA-binding to the ssDNA for homologous DNA recombination and repair. Holoenzyme degrades any linearized DNA that is unable to undergo homologous recombination. In the holoenzyme this subunit contributes ATPase, 3'-5' helicase, exonuclease activity and loads RecA onto ssDNA. The protein is RecBCD enzyme subunit RecB of Buchnera aphidicola subsp. Acyrthosiphon pisum (strain APS) (Acyrthosiphon pisum symbiotic bacterium).